We begin with the raw amino-acid sequence, 618 residues long: Auxin efflux carrier component 3a (618 aa).

Topologically, residues 1 to 6 (MISGHD) are extracellular. A helical membrane pass occupies residues 7-27 (FYTVMAAVVPLYVAMFLAYGS). At 28–38 (VRWWGIFTPDQ) the chain is on the cytoplasmic side. A helical transmembrane segment spans residues 39–59 (CSGINRFVAIFAVPLLSFHFI). Val-51 is a (indol-3-yl)acetate binding site. Residues 60–70 (STNDPYAMNLR) lie on the Extracellular side of the membrane. Residues 71 to 90 (FLAADTLQKLLVLAGLAAWS) form a helical membrane-spanning segment. Residues 91–104 (RLPSRTGAPRLDWS) lie on the Cytoplasmic side of the membrane. Residues 105–125 (ITLFSLSTLPNTLVMGIPLLI) traverse the membrane as a helical segment. Positions 115 and 117 each coordinate (indol-3-yl)acetate. The Extracellular portion of the chain corresponds to 126 to 134 (AMYGPYSGS). Residues 135–155 (LMVQIVVLQCIIWYTLMLFLF) form a helical membrane-spanning segment. Tyr-148 is a (indol-3-yl)acetate binding site. Topologically, residues 156–478 (EFRAARMLIA…LIRNPNTYSS (323 aa)) are cytoplasmic. Polar residues predominate over residues 281-293 (SLQSSRGPTPRQS). Residues 281–312 (SLQSSRGPTPRQSNFDEHSARPPKPPATTTGA) are disordered. A helical membrane pass occupies residues 479 to 499 (LLGLAWSLVAFRWHVSMPAIV). The Extracellular portion of the chain corresponds to 500–502 (EKS). A helical transmembrane segment spans residues 503–523 (ISILSDAGLGMAMFSLGLFMA). The Cytoplasmic segment spans residues 524-539 (LQPSIIACGKSAAVVS). The helical transmembrane segment at 540-560 (MAVRFLAGPAVMAAASIAIGL) threads the bilayer. Topologically, residues 561-563 (RGT) are extracellular. Residues 564–584 (LLHVAIVQAALPQGIVPFVFA) form a helical membrane-spanning segment. (indol-3-yl)acetate contacts are provided by Ile-578 and Val-579. Residues 585–597 (KEYNVHPAILSTA) are Cytoplasmic-facing. A helical membrane pass occupies residues 598-618 (VIFGMLIALPITLLYYILLGL).

Belongs to the auxin efflux carrier (TC 2.A.69.1) family. Homodimer. Expressed in coleoptiles, roots, vascular bundles of leaves, shoots, lamina joints and vascular bundles of the lemma and filament. Expressed in stem bases, stems, leaves and young panicles.

The protein localises to the cell membrane. Acts as a component of the auxin efflux carrier. Involved in the polar auxin transport which may regulate crown root development and response to water stress. The chain is Auxin efflux carrier component 3a from Oryza sativa subsp. japonica (Rice).